The sequence spans 606 residues: Zinc finger protein 652 (606 aa).

Phosphoserine is present on S57. The span at 71 to 97 (HLHETEEQPYFRETRAVSDVHAVKEDR) shows a compositional bias: basic and acidic residues. Disordered stretches follow at residues 71-113 (HLHE…VSYK) and 130-235 (VSKG…APVQ). The segment covering 98–109 (ENSDDTEEEEEE) has biased composition (acidic residues). The residue at position 100 (S100) is a Phosphoserine. T103 is subject to Phosphothreonine. Over residues 137–149 (VSSQSKETPVLKT) the composition is skewed to polar residues. Over residues 152–170 (EEEEEESEEEATDDSNDYG) the composition is skewed to acidic residues. Basic and acidic residues predominate over residues 171–183 (ENEKQKKKEKIVE). The span at 184-209 (KVSVTQRRTRRAASVAAATTSPTPRT) shows a compositional bias: low complexity. Phosphoserine occurs at positions 197 and 204. The segment at 245-268 (LTCEKCPRVFNTRWYLEKHMNVTH) adopts a C2H2-type 1 zinc-finger fold. The segment at 272 to 294 (QICDKCGKKFVLESELSLHQQTD) adopts a C2H2-type 2; degenerate zinc-finger fold. 6 C2H2-type zinc fingers span residues 299–322 (IQCV…KIVH), 329–351 (FSCE…MVAH), 357–379 (FTCE…SLQH), 385–407 (FRCE…MSIH), 413–435 (FMCQ…MKTH), and 441–463 (FICE…RRTH). The segment at 469 to 492 (YPCDVCGQRFRFSNMLKAHKEKCF) adopts a C2H2-type 9; degenerate zinc-finger fold. Residues 498 to 606 (VNVPPAVQIP…AEKNSSAQHH (109 aa)) are mediates interaction with CBFA2T3.

The protein belongs to the krueppel C2H2-type zinc-finger protein family. In terms of assembly, interacts with CBFA2T3. In terms of tissue distribution, widely expressed with higher expression in breast, prostate, vulva and pancreas.

The protein localises to the nucleus. In terms of biological role, functions as a transcriptional repressor. This Homo sapiens (Human) protein is Zinc finger protein 652 (ZNF652).